The following is a 70-amino-acid chain: Large ribosomal subunit protein eL38 (70 aa).

The protein belongs to the eukaryotic ribosomal protein eL38 family.

The polypeptide is Large ribosomal subunit protein eL38 (RpL38) (Timarcha balearica).